The chain runs to 871 residues: DNA mismatch repair protein MutS (871 aa).

617 to 624 (GPNMGGKS) is a binding site for ATP.

This sequence belongs to the DNA mismatch repair MutS family.

This protein is involved in the repair of mismatches in DNA. It is possible that it carries out the mismatch recognition step. This protein has a weak ATPase activity. The protein is DNA mismatch repair protein MutS of Hydrogenovibrio crunogenus (strain DSM 25203 / XCL-2) (Thiomicrospira crunogena).